The following is a 114-amino-acid chain: Large ribosomal subunit protein uL22 (114 aa).

This sequence belongs to the universal ribosomal protein uL22 family. Part of the 50S ribosomal subunit.

Its function is as follows. This protein binds specifically to 23S rRNA; its binding is stimulated by other ribosomal proteins, e.g. L4, L17, and L20. It is important during the early stages of 50S assembly. It makes multiple contacts with different domains of the 23S rRNA in the assembled 50S subunit and ribosome. In terms of biological role, the globular domain of the protein is located near the polypeptide exit tunnel on the outside of the subunit, while an extended beta-hairpin is found that lines the wall of the exit tunnel in the center of the 70S ribosome. The polypeptide is Large ribosomal subunit protein uL22 (Streptococcus uberis (strain ATCC BAA-854 / 0140J)).